A 201-amino-acid polypeptide reads, in one-letter code: Holliday junction branch migration complex subunit RuvA (201 aa).

Residues 1-63 (MYDYIKGIVK…EDNISLFGFQ (63 aa)) form a domain I region. Positions 64 to 142 (STEERYLFKK…DVVASEIVYK (79 aa)) are domain II. The flexible linker stretch occupies residues 143–153 (AAENDIVTGLS). The segment at 153 to 201 (SPQLEEAVLALEALGYSTRELKKVIPKMAKENDLTSDAYIKLALRLMTK) is domain III.

The protein belongs to the RuvA family. As to quaternary structure, homotetramer. Forms an RuvA(8)-RuvB(12)-Holliday junction (HJ) complex. HJ DNA is sandwiched between 2 RuvA tetramers; dsDNA enters through RuvA and exits via RuvB. An RuvB hexamer assembles on each DNA strand where it exits the tetramer. Each RuvB hexamer is contacted by two RuvA subunits (via domain III) on 2 adjacent RuvB subunits; this complex drives branch migration. In the full resolvosome a probable DNA-RuvA(4)-RuvB(12)-RuvC(2) complex forms which resolves the HJ.

Its subcellular location is the cytoplasm. In terms of biological role, the RuvA-RuvB-RuvC complex processes Holliday junction (HJ) DNA during genetic recombination and DNA repair, while the RuvA-RuvB complex plays an important role in the rescue of blocked DNA replication forks via replication fork reversal (RFR). RuvA specifically binds to HJ cruciform DNA, conferring on it an open structure. The RuvB hexamer acts as an ATP-dependent pump, pulling dsDNA into and through the RuvAB complex. HJ branch migration allows RuvC to scan DNA until it finds its consensus sequence, where it cleaves and resolves the cruciform DNA. The protein is Holliday junction branch migration complex subunit RuvA of Listeria innocua serovar 6a (strain ATCC BAA-680 / CLIP 11262).